The sequence spans 90 residues: Small ribosomal subunit protein bS18 (90 aa).

The segment covering 1 to 14 (MARDNGNKDRDGKR) has biased composition (basic and acidic residues). A disordered region spans residues 1 to 23 (MARDNGNKDRDGKRPNGGRNRKM).

This sequence belongs to the bacterial ribosomal protein bS18 family. Part of the 30S ribosomal subunit. Forms a tight heterodimer with protein bS6.

Functionally, binds as a heterodimer with protein bS6 to the central domain of the 16S rRNA, where it helps stabilize the platform of the 30S subunit. The chain is Small ribosomal subunit protein bS18 from Clostridium acetobutylicum (strain ATCC 824 / DSM 792 / JCM 1419 / IAM 19013 / LMG 5710 / NBRC 13948 / NRRL B-527 / VKM B-1787 / 2291 / W).